The following is a 467-amino-acid chain: 6-phospho-beta-galactosidase (467 aa).

The D-galactose 6-phosphate site is built by Gln-19, His-116, Asn-159, Glu-160, and Asn-297. Glu-160 serves as the catalytic Proton donor. Catalysis depends on Glu-375, which acts as the Nucleophile. 4 residues coordinate D-galactose 6-phosphate: Ser-428, Trp-429, Lys-435, and Tyr-437.

It belongs to the glycosyl hydrolase 1 family.

It carries out the reaction a 6-phospho-beta-D-galactoside + H2O = D-galactose 6-phosphate + an alcohol. The protein operates within carbohydrate metabolism; lactose degradation; D-galactose 6-phosphate and beta-D-glucose from lactose 6-phosphate: step 1/1. Its activity is regulated as follows. Inhibited by both galactose-6-phosphate and ATP. This Leptotrichia buccalis (strain ATCC 14201 / DSM 1135 / JCM 12969 / NCTC 10249 / C-1013-b) protein is 6-phospho-beta-galactosidase.